The primary structure comprises 354 residues: Rhodopsin (354 aa).

The Extracellular portion of the chain corresponds to 1-36; it reads MNGTEGPNFYIPMSNKTGVVRSPFDYPQYYLAEPWK. Asn-2 carries an N-linked (GlcNAc...) (hybrid) asparagine glycan. Asn-15 carries an N-linked (GlcNAc...) asparagine glycan. A helical transmembrane segment spans residues 37-61; that stretch reads YSVLAAYMFLLILLGLPINFMTLYV. The Cytoplasmic segment spans residues 62–73; the sequence is TIQHKKLRTPLN. Residues 74 to 96 form a helical membrane-spanning segment; sequence YILLNLGVCNHFMVLCGFTITMY. Topologically, residues 97–110 are extracellular; it reads TSLHGYFVFGQTGC. Residues Cys-110 and Cys-187 are joined by a disulfide bond. A helical transmembrane segment spans residues 111-133; sequence YFEGFFATLGGEIALWSLVVLAI. The 'Ionic lock' involved in activated form stabilization motif lies at 134 to 136; sequence ERY. Residues 134–152 lie on the Cytoplasmic side of the membrane; the sequence is ERYIVVCKPMSNFRFGENH. Residues 153-173 traverse the membrane as a helical segment; it reads AMMGVAFTWIMALACAVPPLF. At 174–202 the chain is on the extracellular side; it reads GWSRYIPEGMQCSCGVDYYTLKPEVNNES. A helical transmembrane segment spans residues 203-224; the sequence is FVIYMFVVHFLIPLIIISFCYG. At 225 to 252 the chain is on the cytoplasmic side; it reads RLVCTVKEAAAQQQESATTQKAEKEVTR. A helical transmembrane segment spans residues 253–274; sequence MVIIMVIFFLICWVPYAYVAFY. The Extracellular segment spans residues 275–286; sequence IFTHQGSEFGPI. The chain crosses the membrane as a helical span at residues 287 to 308; that stretch reads FMTVPAFFAKSSAIYNPVIYIM. Lys-296 is subject to N6-(retinylidene)lysine. Over 309–354 the chain is Cytoplasmic; the sequence is LNKQFRNCMITTLCCGKNPFGDDDASSAATSKTEATSVSTSQVSPA. Residues Cys-322 and Cys-323 are each lipidated (S-palmitoyl cysteine). The tract at residues 332 to 354 is disordered; that stretch reads DASSAATSKTEATSVSTSQVSPA. Residues 334–354 are compositionally biased toward low complexity; sequence SSAATSKTEATSVSTSQVSPA.

It belongs to the G-protein coupled receptor 1 family. Opsin subfamily. Post-translationally, contains one covalently linked retinal chromophore. Upon light absorption, the covalently bound 11-cis-retinal is converted to all-trans-retinal. After hydrolysis of the Schiff base and release of the covalently bound all-trans-retinal, active rhodopsin is regenerated by binding of a fresh molecule of 11-cis-retinal. As to expression, detected in retina rod photoreceptor cell outer segments (at protein level). Detected in retina.

Its subcellular location is the membrane. The protein localises to the cell projection. The protein resides in the cilium. It localises to the photoreceptor outer segment. Its function is as follows. Photoreceptor required for image-forming vision at low light intensity. Required for photoreceptor cell viability after birth. Light-induced isomerization of 11-cis to all-trans retinal triggers a conformational change that activates signaling via G-proteins. Subsequent receptor phosphorylation mediates displacement of the bound G-protein alpha subunit by arrestin and terminates signaling. In Lithobates pipiens (Northern leopard frog), this protein is Rhodopsin (RHO).